A 254-amino-acid polypeptide reads, in one-letter code: MAATARRGWGAAAVAAGLRRRFCHMLKNPYTIKKQPLHQFVQRPLFPLPAAFYHPVRYMFIQTQDTPNPNSLKFIPGKPVLETRTMDFPTPAAAFRSPLARQLFRIEGVKSVFFGPDFITVTKENEELDWNLLKPDIYATIMDFFASGLPLVTEETPSGEAGSEEDDEVVAMIKELLDTRIRPTVQEDGGDVIYKGFEDGIVQLKLQGSCTSCPSSIITLKNGIQNMLQFYIPEVEGVEQVMDDESDEKEANSP.

Residues 1–9 constitute a mitochondrion transit peptide; it reads MAATARRGW. The nifU stretch occupies residues 173 to 241; it reads IKELLDTRIR…IPEVEGVEQV (69 aa). [4Fe-4S] cluster is bound by residues C210 and C213.

The protein belongs to the NifU family. In terms of assembly, monomer and homohexamer; the apo-NFU1 is a monomer, while the holo-NFU1 is a hexamer composed of a trimer of dimer that is probably linked by some 4Fe-4S cluster. Interacts with HIRA and EPM2A/laforin. Interacts with BOLA3. Interacts with HSPA9. Ubiquitous. Expression in adult lung is weak compared to fetal lung.

Its subcellular location is the mitochondrion. The protein localises to the cytoplasm. It localises to the cytosol. Functionally, iron-sulfur cluster scaffold protein which can assemble [4Fe-4S] clusters and deliver them to target proteins. This is NFU1 iron-sulfur cluster scaffold homolog, mitochondrial (NFU1) from Homo sapiens (Human).